Consider the following 398-residue polypeptide: Enoyl-[acyl-carrier-protein] reductase [NADH] (398 aa).

NAD(+) is bound by residues 48 to 53, 74 to 75, 111 to 112, and 139 to 140; these read GASTGY, FE, DA, and LA. Tyrosine 225 is a substrate binding site. Catalysis depends on tyrosine 235, which acts as the Proton donor. Residues lysine 244 and 273–275 each bind NAD(+); that span reads VVT.

This sequence belongs to the TER reductase family. In terms of assembly, monomer.

It catalyses the reaction a 2,3-saturated acyl-[ACP] + NAD(+) = a (2E)-enoyl-[ACP] + NADH + H(+). Its pathway is lipid metabolism; fatty acid biosynthesis. In terms of biological role, involved in the final reduction of the elongation cycle of fatty acid synthesis (FAS II). Catalyzes the reduction of a carbon-carbon double bond in an enoyl moiety that is covalently linked to an acyl carrier protein (ACP). The protein is Enoyl-[acyl-carrier-protein] reductase [NADH] of Paraburkholderia xenovorans (strain LB400).